Reading from the N-terminus, the 195-residue chain is Granulocyte colony-stimulating factor (195 aa).

The first 21 residues, 1-21, serve as a signal peptide directing secretion; it reads MKLMALQLLLWHIALWMVPEA. Cystine bridges form between Cys-57–Cys-63 and Cys-85–Cys-95. Thr-154 carries O-linked (GalNAc...) threonine glycosylation.

Belongs to the IL-6 superfamily. Monomer. O-glycosylated.

It is found in the secreted. Its function is as follows. Granulocyte/macrophage colony-stimulating factors are cytokines that act in hematopoiesis by controlling the production, differentiation, and function of 2 related white cell populations of the blood, the granulocytes and the monocytes-macrophages. This CSF induces granulocytes. In Sus scrofa (Pig), this protein is Granulocyte colony-stimulating factor (CSF3).